We begin with the raw amino-acid sequence, 301 residues long: Probable protein phosphatase 2C 4 (301 aa).

Polar residues predominate over residues 1 to 18; sequence MGPYLSQPNKNKTTTSGE. Positions 1 to 20 are disordered; that stretch reads MGPYLSQPNKNKTTTSGEGK. The region spanning 23 to 298 is the PPM-type phosphatase domain; sequence IFAASEMQGW…DNMTTLIIYL (276 aa). Mn(2+) contacts are provided by aspartate 57, glycine 58, aspartate 237, and aspartate 289.

This sequence belongs to the PP2C family. Mg(2+) serves as cofactor. It depends on Mn(2+) as a cofactor.

It localises to the membrane. It catalyses the reaction O-phospho-L-seryl-[protein] + H2O = L-seryl-[protein] + phosphate. The enzyme catalyses O-phospho-L-threonyl-[protein] + H2O = L-threonyl-[protein] + phosphate. In terms of biological role, enzyme with a broad specificity. In Paramecium tetraurelia, this protein is Probable protein phosphatase 2C 4.